A 118-amino-acid chain; its full sequence is MFSTSRIISRINYNFLRKSHYSTKTVAEQAKGRFTPLIQKLSAVQQPIMYWANVSKELVQQVYHSQKIAPPSNTHSPFLFWKSQSSEAWGRNFFIAVEIVGIFCAGQMVGRRKITPYH.

It belongs to the ATPase g subunit family. F-type ATPases have 2 components, CF(1) - the catalytic core - and CF(0) - the membrane proton channel.

The protein localises to the mitochondrion membrane. Functionally, mitochondrial membrane ATP synthase (F(1)F(0) ATP synthase or Complex V) produces ATP from ADP in the presence of a proton gradient across the membrane which is generated by electron transport complexes of the respiratory chain. F-type ATPases consist of two structural domains, F(1) - containing the extramembraneous catalytic core, and F(0) - containing the membrane proton channel, linked together by a central stalk and a peripheral stalk. During catalysis, ATP synthesis in the catalytic domain of F(1) is coupled via a rotary mechanism of the central stalk subunits to proton translocation. Part of the complex F(0) domain. Minor subunit located with subunit a in the membrane. The chain is ATP synthase subunit g, mitochondrial (atp20) from Schizosaccharomyces pombe (strain 972 / ATCC 24843) (Fission yeast).